The chain runs to 532 residues: O-phosphoserine--tRNA(Cys) ligase (532 aa).

Residues 188–190, 233–235, 275–276, and asparagine 327 contribute to the substrate site; these read HMT, SAS, and YY.

Belongs to the class-II aminoacyl-tRNA synthetase family. O-phosphoseryl-tRNA(Cys) synthetase subfamily. In terms of assembly, homotetramer. Interacts with SepCysS.

It catalyses the reaction tRNA(Cys) + O-phospho-L-serine + ATP = O-phospho-L-seryl-tRNA(Cys) + AMP + diphosphate. Its function is as follows. Catalyzes the attachment of O-phosphoserine (Sep) to tRNA(Cys). The protein is O-phosphoserine--tRNA(Cys) ligase of Methanocella arvoryzae (strain DSM 22066 / NBRC 105507 / MRE50).